A 438-amino-acid polypeptide reads, in one-letter code: Battenin (438 aa).

The tract at residues 1 to 25 (MGGCAGSRRRLSDSEGEETVPEPRL) is disordered. At 1-37 (MGGCAGSRRRLSDSEGEETVPEPRLPLLDHQGAHWKN) the chain is on the cytoplasmic side. Residues Ser-12 and Ser-14 each carry the phosphoserine modification. The chain crosses the membrane as a helical span at residues 38-58 (AVGFWLLGLCNNFSYVVMLSA). Residues 59–127 (AHDILSHERT…GLHLLPYSPR (69 aa)) are Lumenal-facing. N-linked (GlcNAc...) asparagine glycosylation is found at Asn-71 and Asn-85. A helical transmembrane segment spans residues 128 to 148 (VLVSGICAAGSFVLVAFSHSV). The Cytoplasmic segment spans residues 149 to 151 (GTS). Residues 152 to 172 (LCGVVLASISSGLGEVTFLSL) traverse the membrane as a helical segment. Residues 173–182 (TAFYPRAVIS) lie on the Lumenal side of the membrane. A helical membrane pass occupies residues 183 to 203 (WWSSGTGGAGLLGALSYLGLT). Residues 204–277 (QAGLSPQQTL…SLSLRERWTV (74 aa)) lie on the Cytoplasmic side of the membrane. The tract at residues 237-268 (QDPGGEEEAESSARQPLIRTEAPESKPGSSSS) is disordered. Residues 242 to 244 (EEE) carry the Lysosomal targeting motif motif. Residues 253–254 (LI) carry the Lysosomal targeting motif. Required for AP1G1, AP2A2 and AP3D1 interaction motif. Residues 278 to 298 (FKGLLWYIVPLVVVYFAEYFI) traverse the membrane as a helical segment. The Lumenal segment spans residues 299–346 (NQGLFELLFFRNTSLSHAQQYRWYQMLYQAGVFASRSSLRCCHIRFTW). Asn-310 carries an N-linked (GlcNAc...) asparagine glycan. The chain crosses the membrane as a helical span at residues 347-367 (ALALLQCLNLAFLLADVWFGF). The Cytoplasmic portion of the chain corresponds to 368-438 (LLSIYFVFLI…PLHDFLCQLS (71 aa)). The Lysosomal targeting motif signature appears at 409–419 (MATTCISDTLG). The residue at position 435 (Cys-435) is a Cysteine methyl ester. Residue Cys-435 is the site of S-farnesyl cysteine attachment. The propeptide at 436–438 (QLS) is removed in mature form.

It belongs to the battenin family. Interacts with DCTN1, KIF3A, RAB7A and RILP. Interacts with CLN5. Post-translationally, highly glycosylated. Farnesylation is important for trafficking to lysosomes.

The protein localises to the lysosome membrane. It is found in the late endosome. Its subcellular location is the lysosome. Its function is as follows. Mediates microtubule-dependent, anterograde transport connecting the Golgi network, endosomes, autophagosomes, lysosomes and plasma membrane, and participates in several cellular processes such as regulation of lysosomal pH, lysosome protein degradation, receptor-mediated endocytosis, autophagy, transport of proteins and lipids from the TGN, apoptosis and synaptic transmission. Facilitates the proteins transport from trans-Golgi network (TGN)-to other membrane compartments such as transport of microdomain-associated proteins to the plasma membrane, IGF2R transport to the lysosome where it regulates the CTSD release leading to regulation of CTSD maturation and thereby APP intracellular processing. Moreover regulates CTSD activity in response to osmotic stress. Also binds galactosylceramide and transports it from the trans Golgi to the rafts, which may have immediate and downstream effects on cell survival by modulating ceramide synthesis. At the plasma membrane, regulates actin-dependent events including filopodia formation, cell migration, and pinocytosis through ARF1-CDC42 pathway and also the cytoskeleton organization through interaction with MYH10 and fodrin leading to the regulation of the plasma membrane association of Na+, K+ ATPase complex. Regulates synaptic transmission in the amygdala, hippocampus, and cerebellum through regulation of synaptic vesicles density and their proximity to active zones leading to modulation of short-term plasticity and age-dependent anxious behavior, learning and memory. Regulates autophagic vacuoles (AVs) maturation by modulating the trafficking between endocytic and autophagolysosomal/lysosomal compartments, which involves vesicle fusion leading to regulation of degradation process. Also participates in cellular homeostasis of compounds such as, water, ions, amino acids, proteins and lipids in several tissue namely in brain and kidney through regulation of their transport and synthesis. This chain is Battenin, found in Macaca fascicularis (Crab-eating macaque).